The following is a 730-amino-acid chain: Elongation factor 2 (730 aa).

A tr-type G domain is found at 19–260 (KFIRNIGIVA…MVVKHLPDPF (242 aa)). Residues 28–35 (AHIDHGKT), 94–98 (DTPGH), and 148–151 (NKVD) each bind GTP. A Diphthamide modification is found at His-597.

It belongs to the TRAFAC class translation factor GTPase superfamily. Classic translation factor GTPase family. EF-G/EF-2 subfamily.

Its subcellular location is the cytoplasm. Catalyzes the GTP-dependent ribosomal translocation step during translation elongation. During this step, the ribosome changes from the pre-translocational (PRE) to the post-translocational (POST) state as the newly formed A-site-bound peptidyl-tRNA and P-site-bound deacylated tRNA move to the P and E sites, respectively. Catalyzes the coordinated movement of the two tRNA molecules, the mRNA and conformational changes in the ribosome. The chain is Elongation factor 2 from Methanosphaerula palustris (strain ATCC BAA-1556 / DSM 19958 / E1-9c).